The following is a 155-amino-acid chain: Xanthine-guanine phosphoribosyltransferase 2 (155 aa).

5-phospho-alpha-D-ribose 1-diphosphate contacts are provided by residues 37-38 (RG) and 91-99 (DDLVDTGNT). Asp-92 contacts Mg(2+). Positions 95 and 138 each coordinate guanine. Xanthine contacts are provided by Asp-95 and Ile-138. GMP-binding positions include 95–99 (DTGNT) and 137–138 (WI).

This sequence belongs to the purine/pyrimidine phosphoribosyltransferase family. XGPT subfamily. As to quaternary structure, homotetramer. Mg(2+) serves as cofactor.

The protein localises to the cell inner membrane. The catalysed reaction is GMP + diphosphate = guanine + 5-phospho-alpha-D-ribose 1-diphosphate. It carries out the reaction XMP + diphosphate = xanthine + 5-phospho-alpha-D-ribose 1-diphosphate. It catalyses the reaction IMP + diphosphate = hypoxanthine + 5-phospho-alpha-D-ribose 1-diphosphate. It participates in purine metabolism; GMP biosynthesis via salvage pathway; GMP from guanine: step 1/1. It functions in the pathway purine metabolism; XMP biosynthesis via salvage pathway; XMP from xanthine: step 1/1. Its function is as follows. Purine salvage pathway enzyme that catalyzes the transfer of the ribosyl-5-phosphate group from 5-phospho-alpha-D-ribose 1-diphosphate (PRPP) to the N9 position of the 6-oxopurines guanine and xanthine to form the corresponding ribonucleotides GMP (guanosine 5'-monophosphate) and XMP (xanthosine 5'-monophosphate), with the release of PPi. To a lesser extent, also acts on hypoxanthine. This Haemophilus influenzae (strain 86-028NP) protein is Xanthine-guanine phosphoribosyltransferase 2.